A 107-amino-acid polypeptide reads, in one-letter code: Large ribosomal subunit protein eL21 (107 aa).

The protein belongs to the eukaryotic ribosomal protein eL21 family.

This Aeropyrum pernix (strain ATCC 700893 / DSM 11879 / JCM 9820 / NBRC 100138 / K1) protein is Large ribosomal subunit protein eL21 (rpl21e).